We begin with the raw amino-acid sequence, 215 residues long: Adenylate kinase (215 aa).

Residue 10–15 participates in ATP binding; that stretch reads GAGKGT. The segment at 30 to 59 is NMP; it reads STGDMFRAAMKNETEMGKLAKSFIDKGELV. Residues threonine 31, arginine 36, 57 to 59, 86 to 89, and glutamine 93 contribute to the AMP site; these read ELV and GYPR. Residues 127 to 165 form an LID region; that stretch reads GRYICRNCGATYHKIFNPTKVEGTCDVCGSHDLYQRADD. Arginine 128 is an ATP binding site. Cysteine 131 and cysteine 134 together coordinate Zn(2+). Position 137–138 (137–138) interacts with ATP; that stretch reads TY. Zn(2+) is bound by residues cysteine 151 and cysteine 154. AMP is bound by residues arginine 162 and arginine 173. Glutamine 201 is a binding site for ATP.

This sequence belongs to the adenylate kinase family. As to quaternary structure, monomer.

Its subcellular location is the cytoplasm. The enzyme catalyses AMP + ATP = 2 ADP. It participates in purine metabolism; AMP biosynthesis via salvage pathway; AMP from ADP: step 1/1. In terms of biological role, catalyzes the reversible transfer of the terminal phosphate group between ATP and AMP. Plays an important role in cellular energy homeostasis and in adenine nucleotide metabolism. In Lactococcus lactis subsp. cremoris (strain SK11), this protein is Adenylate kinase.